The primary structure comprises 448 residues: N-succinylarginine dihydrolase (448 aa).

Substrate contacts are provided by residues 19–28 (GGLSYGNVAS), N110, and 137–138 (HR). E174 is a catalytic residue. R214 is a binding site for substrate. The active site involves H250. Residues D252 and N365 each contribute to the substrate site. C371 (nucleophile) is an active-site residue.

Belongs to the succinylarginine dihydrolase family. In terms of assembly, homodimer.

The enzyme catalyses N(2)-succinyl-L-arginine + 2 H2O + 2 H(+) = N(2)-succinyl-L-ornithine + 2 NH4(+) + CO2. It functions in the pathway amino-acid degradation; L-arginine degradation via AST pathway; L-glutamate and succinate from L-arginine: step 2/5. Catalyzes the hydrolysis of N(2)-succinylarginine into N(2)-succinylornithine, ammonia and CO(2). In Pseudomonas aeruginosa (strain UCBPP-PA14), this protein is N-succinylarginine dihydrolase.